Reading from the N-terminus, the 97-residue chain is Aspartyl/glutamyl-tRNA(Asn/Gln) amidotransferase subunit C (97 aa).

It belongs to the GatC family. As to quaternary structure, heterotrimer of A, B and C subunits.

The catalysed reaction is L-glutamyl-tRNA(Gln) + L-glutamine + ATP + H2O = L-glutaminyl-tRNA(Gln) + L-glutamate + ADP + phosphate + H(+). The enzyme catalyses L-aspartyl-tRNA(Asn) + L-glutamine + ATP + H2O = L-asparaginyl-tRNA(Asn) + L-glutamate + ADP + phosphate + 2 H(+). Its function is as follows. Allows the formation of correctly charged Asn-tRNA(Asn) or Gln-tRNA(Gln) through the transamidation of misacylated Asp-tRNA(Asn) or Glu-tRNA(Gln) in organisms which lack either or both of asparaginyl-tRNA or glutaminyl-tRNA synthetases. The reaction takes place in the presence of glutamine and ATP through an activated phospho-Asp-tRNA(Asn) or phospho-Glu-tRNA(Gln). The sequence is that of Aspartyl/glutamyl-tRNA(Asn/Gln) amidotransferase subunit C from Nostoc punctiforme (strain ATCC 29133 / PCC 73102).